The chain runs to 422 residues: MEFMAATTSIADTDMEFDKNVPRICGVCGDKATGFHFNAMTCEGCKGFFRRSMKRKAMFTCPFNGDCRITKDNRRHCQSCRLKRCVDIGMMKEFILTDEEVQRKRQMINKRKSEEALKESMRPKISDEQQKMIDILLEAHRKTFDTTYSDFNKFRPPVRENVDPFRRITRSSSVHTQGSPSEDSDVFTSSPDSSEHGFFSASLFGQFEYSSMGGKSGELSMLPHIADLVSYSIQKIIGFAKMIPGFRDLIAEDQIALLKSSVIEVIMLRSNQSFSLDDMSWTCGSEDFKYKVDDVTQAGHNMELLEPLVKFQVGLKKLDLHEEEHVLLMAICILSPDRPGLQDKALVESIQDRLSSTLQTYILCKHPPPGSRLLYAKMIQKLADLRSLNEEHSKQYRSISFLPEHSMKLTPLMLEVFSDEIP.

Positions 22–90 form a DNA-binding region, nuclear receptor; sequence PRICGVCGDK…RLKRCVDIGM (69 aa). Positions 25, 28, 42, 45, 61, 67, 77, and 80 each coordinate Zn(2+). 2 NR C4-type zinc fingers span residues 25–45 and 61–85; these read CGVC…CEGC and CPFN…LKRC. The segment at 98-127 is hinge; the sequence is DEEVQRKRQMINKRKSEEALKESMRPKISD. Residues 128-418 enclose the NR LBD domain; sequence EQQKMIDILL…LTPLMLEVFS (291 aa). The interval 170–191 is disordered; sequence RSSSVHTQGSPSEDSDVFTSSP. S232 contributes to the calcitriol binding site. Residues 241–259 are interaction with coactivator LXXLL motif; that stretch reads KMIPGFRDLIAEDQIALLK. 4 residues coordinate calcitriol: R269, S273, H300, and H392. The short motif at 411–419 is the 9aaTAD element; the sequence is PLMLEVFSD.

This sequence belongs to the nuclear hormone receptor family. NR1 subfamily. In terms of assembly, homodimer in the absence of bound vitamin D3. Heterodimer with RXRA after vitamin D3 binding. In terms of tissue distribution, detected in all tissues examined. Highest level in small intestine and skin.

It is found in the nucleus. The protein localises to the cytoplasm. Its function is as follows. Nuclear receptor for calcitriol, the active form of vitamin D3 which mediates the action of this vitamin on cells. Enters the nucleus upon vitamin D3 binding where it forms heterodimers with the retinoid X receptor/RXR. The VDR-RXR heterodimers bind to specific response elements on DNA and activate the transcription of vitamin D3-responsive target genes. Plays a central role in calcium homeostasis. Also functions as a receptor for the secondary bile acid lithocholic acid (LCA) and its metabolites. The protein is Vitamin D3 receptor (vdr) of Xenopus laevis (African clawed frog).